A 173-amino-acid polypeptide reads, in one-letter code: Sialic acid TRAP transporter small permease protein SiaQ (173 aa).

4 consecutive transmembrane segments (helical) span residues 13 to 33 (IEEI…TWQI), 46 to 66 (SEEL…AIAI), 87 to 107 (LSLV…IIVL), and 123 to 143 (LGIS…FMVF).

This sequence belongs to the TRAP transporter small permease family. As to quaternary structure, the complex comprises the extracytoplasmic solute receptor protein SiaP, and the two transmembrane proteins SiaQ and SiaM. SiaQ and SiaM form a tight 1:1 complex.

The protein localises to the cell inner membrane. Functionally, part of the tripartite ATP-independent periplasmic (TRAP) transport system SiaPQM that catalyzes unidirectional Na(+)-dependent sialic acid uptake. The protein is Sialic acid TRAP transporter small permease protein SiaQ of Vibrio cholerae serotype O1 (strain ATCC 39315 / El Tor Inaba N16961).